A 185-amino-acid polypeptide reads, in one-letter code: Ribosome-recycling factor (185 aa).

This sequence belongs to the RRF family.

It is found in the cytoplasm. Responsible for the release of ribosomes from messenger RNA at the termination of protein biosynthesis. May increase the efficiency of translation by recycling ribosomes from one round of translation to another. The polypeptide is Ribosome-recycling factor (Shewanella halifaxensis (strain HAW-EB4)).